The primary structure comprises 388 residues: WD repeat-containing protein 55 (388 aa).

The span at methionine 1–leucine 20 shows a compositional bias: acidic residues. Residues methionine 1–proline 33 form a disordered region. WD repeat units lie at residues valine 37–lysine 76, histidine 83–arginine 122, alanine 126–aspartate 164, glutamine 167–leucine 206, proline 209–aspartate 248, alanine 251–threonine 290, and glutamine 293–valine 333. The residue at position 355 (serine 355) is a Phosphoserine. The segment at arginine 364–aspartate 388 is disordered. Over residues alanine 370–glutamate 379 the composition is skewed to basic and acidic residues.

It belongs to the WD repeat WDR55 family.

It is found in the nucleus. The protein resides in the nucleolus. Its subcellular location is the cytoplasm. Nucleolar protein that acts as a modulator of rRNA synthesis. Plays a central role during organogenesis. This chain is WD repeat-containing protein 55 (Wdr55), found in Mus musculus (Mouse).